The primary structure comprises 260 residues: Snake venom serine protease serpentokallikrein-1 (260 aa).

The first 18 residues, 1-18 (MVLIRVLANLLILQLSYA), serve as a signal peptide directing secretion. Residues 19–24 (QRTSEL) constitute a propeptide that is removed on maturation. The Peptidase S1 domain maps to 25–251 (VIGGDECNIN…HLDWIKSIIA (227 aa)). 6 cysteine pairs are disulfide-bonded: cysteine 31/cysteine 165, cysteine 52/cysteine 68, cysteine 102/cysteine 258, cysteine 144/cysteine 212, cysteine 176/cysteine 191, and cysteine 202/cysteine 227. The active-site Charge relay system is the histidine 67. Residues asparagine 81 and asparagine 105 are each glycosylated (N-linked (GlcNAc...) asparagine). The active-site Charge relay system is the aspartate 112. 2 N-linked (GlcNAc...) asparagine glycosylation sites follow: asparagine 156 and asparagine 172. Serine 206 functions as the Charge relay system in the catalytic mechanism.

This sequence belongs to the peptidase S1 family. Snake venom subfamily. As to quaternary structure, monomer. Expressed by the venom gland.

Its subcellular location is the secreted. Its function is as follows. Snake venom serine protease that may act in the hemostasis system of the prey. This chain is Snake venom serine protease serpentokallikrein-1, found in Protobothrops mucrosquamatus (Taiwan habu).